The chain runs to 728 residues: Elongation factor 2 (728 aa).

Positions 19–261 constitute a tr-type G domain; the sequence is EHIRNIAIAA…MVCEHFPNPV (243 aa). GTP-binding positions include 28-35, 94-98, and 148-151; these read AHVDHGKT, DTPGH, and NKVD. A Diphthamide modification is found at H596.

Belongs to the TRAFAC class translation factor GTPase superfamily. Classic translation factor GTPase family. EF-G/EF-2 subfamily.

The protein localises to the cytoplasm. In terms of biological role, catalyzes the GTP-dependent ribosomal translocation step during translation elongation. During this step, the ribosome changes from the pre-translocational (PRE) to the post-translocational (POST) state as the newly formed A-site-bound peptidyl-tRNA and P-site-bound deacylated tRNA move to the P and E sites, respectively. Catalyzes the coordinated movement of the two tRNA molecules, the mRNA and conformational changes in the ribosome. The chain is Elongation factor 2 from Haloarcula marismortui (strain ATCC 43049 / DSM 3752 / JCM 8966 / VKM B-1809) (Halobacterium marismortui).